Reading from the N-terminus, the 123-residue chain is Small ribosomal subunit protein uS12c (123 aa).

The protein belongs to the universal ribosomal protein uS12 family. In terms of assembly, part of the 30S ribosomal subunit.

The protein localises to the plastid. It localises to the chloroplast. In terms of biological role, with S4 and S5 plays an important role in translational accuracy. Located at the interface of the 30S and 50S subunits. The protein is Small ribosomal subunit protein uS12c (rps12) of Pinus thunbergii (Japanese black pine).